The primary structure comprises 801 residues: Na(+)/H(+) antiporter subunit A1 (801 aa).

21 helical membrane-spanning segments follow: residues 4-25 (LHIAVILPLIFALIIPILYRFF), 30-49 (LGWFVLPVPIVIFIYMLTLI), 79-101 (LGLLFSLLISGIGSLVVLYSIGY), 108-127 (LGNFYCYLLLFMGAMLGVVL), 131-153 (VIILYLFWELTSFSSFLLISFWR), 166-188 (LIITVFGGLSLLGGIILLAIPTQ), 208-230 (FIFAMILIMIGAFTKSAQFPFYI), 243-265 (SAYLHSATMVKAGLYLIARMTPI), 270-289 (QGWIWTVTLVGLITLFWASL), 302-324 (AFSTVSQLGMIMAMLGIGAISYH), 339-361 (AAIFHLINHATFKGALFMITGAV), 373-395 (LGGLLTIMPISFTITVITALSMA), 429-451 (YLFPIIGIVGSVFTFVYSIKFIM), 472-494 (ILMLLSPAILATLVIVFGLFPGI), 526-548 (AFLSTLVIYILGILLIVTFSYWV), 589-611 (NNLVIIFGALILLTFVTVFSVPF), 621-641 (IRIFEVCIVILLLSAAFLILF), 646-668 (LFSIIMLSAVGYAVSVLFIFFKA), 672-694 (ALTQFVVESISTALFLLCFYHLP), 707-729 (LTNALIAGGVGLSVIIIGLIAYG), and 767-784 (LFESSVLGIAGLAVYTMI).

The protein belongs to the CPA3 antiporters (TC 2.A.63) subunit A family. In terms of assembly, may form a heterooligomeric complex that consists of seven subunits: mnhA1, mnhB1, mnhC1, mnhD1, mnhE1, mnhF1 and mnhG1.

It is found in the cell membrane. With respect to regulation, na(+) extrusion is completely inhibited by the H(+) conductor carbonyl cyanide m-chlorophenylhydrazone (CCCP). Mnh complex is a Na(+)/H(+) antiporter involved in Na(+) excretion. The protein is Na(+)/H(+) antiporter subunit A1 (mnhA1) of Staphylococcus aureus (strain MRSA252).